The following is a 364-amino-acid chain: Dual-specificity RNA methyltransferase RlmN (364 aa).

The Proton acceptor role is filled by Glu-91. The 237-residue stretch at 97-333 folds into the Radical SAM core domain; the sequence is ESDRGTLCIS…VTVRKTRGDD (237 aa). Cys-104 and Cys-338 are disulfide-bonded. [4Fe-4S] cluster contacts are provided by Cys-111, Cys-115, and Cys-118. S-adenosyl-L-methionine-binding positions include 164–165, Ser-196, 218–220, and Asn-295; these read GE and SLH. Cys-338 (S-methylcysteine intermediate) is an active-site residue.

The protein belongs to the radical SAM superfamily. RlmN family. [4Fe-4S] cluster is required as a cofactor.

The protein resides in the cytoplasm. The enzyme catalyses adenosine(2503) in 23S rRNA + 2 reduced [2Fe-2S]-[ferredoxin] + 2 S-adenosyl-L-methionine = 2-methyladenosine(2503) in 23S rRNA + 5'-deoxyadenosine + L-methionine + 2 oxidized [2Fe-2S]-[ferredoxin] + S-adenosyl-L-homocysteine. The catalysed reaction is adenosine(37) in tRNA + 2 reduced [2Fe-2S]-[ferredoxin] + 2 S-adenosyl-L-methionine = 2-methyladenosine(37) in tRNA + 5'-deoxyadenosine + L-methionine + 2 oxidized [2Fe-2S]-[ferredoxin] + S-adenosyl-L-homocysteine. Functionally, specifically methylates position 2 of adenine 2503 in 23S rRNA and position 2 of adenine 37 in tRNAs. m2A2503 modification seems to play a crucial role in the proofreading step occurring at the peptidyl transferase center and thus would serve to optimize ribosomal fidelity. The protein is Dual-specificity RNA methyltransferase RlmN of Neisseria meningitidis serogroup A / serotype 4A (strain DSM 15465 / Z2491).